Here is a 111-residue protein sequence, read N- to C-terminus: ATP synthase subunit c (111 aa).

The next 2 helical transmembrane spans lie at 38-58 (GLGV…GSGL) and 89-109 (AGIA…LIFV).

Belongs to the ATPase C chain family. F-type ATPases have 2 components, F(1) - the catalytic core - and F(0) - the membrane proton channel. F(1) has five subunits: alpha(3), beta(3), gamma(1), delta(1), epsilon(1). F(0) has three main subunits: a(1), b(2) and c(10-14). The alpha and beta chains form an alternating ring which encloses part of the gamma chain. F(1) is attached to F(0) by a central stalk formed by the gamma and epsilon chains, while a peripheral stalk is formed by the delta and b chains.

The protein localises to the cell membrane. In terms of biological role, f(1)F(0) ATP synthase produces ATP from ADP in the presence of a proton or sodium gradient. F-type ATPases consist of two structural domains, F(1) containing the extramembraneous catalytic core and F(0) containing the membrane proton channel, linked together by a central stalk and a peripheral stalk. During catalysis, ATP synthesis in the catalytic domain of F(1) is coupled via a rotary mechanism of the central stalk subunits to proton translocation. Functionally, key component of the F(0) channel; it plays a direct role in translocation across the membrane. A homomeric c-ring of between 10-14 subunits forms the central stalk rotor element with the F(1) delta and epsilon subunits. In Mycoplasmopsis synoviae (strain 53) (Mycoplasma synoviae), this protein is ATP synthase subunit c.